The following is a 579-amino-acid chain: Copine-E (579 aa).

C2 domains lie at 45–175 (IDPS…KVIG) and 183–304 (QTGT…EFTL). Residues Asp80, Asp86, Asp145, Asp147, and Asp153 each contribute to the Ca(2+) site. Residues 345–552 (NLMIAIDCTA…KKYENDPEQL (208 aa)) form the VWFA domain.

Belongs to the copine family. Requires Ca(2+) as cofactor.

The polypeptide is Copine-E (cpnE) (Dictyostelium discoideum (Social amoeba)).